Reading from the N-terminus, the 153-residue chain is Ribosome maturation factor RimP (153 aa).

The protein belongs to the RimP family.

The protein localises to the cytoplasm. Functionally, required for maturation of 30S ribosomal subunits. The polypeptide is Ribosome maturation factor RimP (Christiangramia forsetii (strain DSM 17595 / CGMCC 1.15422 / KT0803) (Gramella forsetii)).